The sequence spans 122 residues: SLLEFGRMIKEETGKNPLSSYISYGCYCGWGGQGEPKDDTDRCCFVHDCCYGKLWGCSPKTDIYFYFRKNGAIVCGRGTWCEKQICECDKAAAICFRENLATYKEEYHSYGKSGCTEKSPKC.

Intrachain disulfides connect cysteine 26–cysteine 115, cysteine 28–cysteine 44, cysteine 43–cysteine 95, cysteine 49–cysteine 122, cysteine 50–cysteine 88, cysteine 57–cysteine 81, and cysteine 75–cysteine 86. Residues tyrosine 27, glycine 29, and glycine 31 each contribute to the Ca(2+) site. The active site involves histidine 47. Aspartate 48 lines the Ca(2+) pocket. The active site involves aspartate 89.

Ca(2+) serves as cofactor. As to expression, expressed by the venom gland.

The protein localises to the secreted. The catalysed reaction is a 1,2-diacyl-sn-glycero-3-phosphocholine + H2O = a 1-acyl-sn-glycero-3-phosphocholine + a fatty acid + H(+). In terms of biological role, snake venom phospholipase A2 that induces fast and sustaining local edema a few hours after injection (5-10 ug) in the hind paw, and prolongs the coagulation time of human plasma. Exhibits moderate hydrolytic activities and prefers the zwitterionic micelles (dPPC with Triton X-100) to the anionic micelles (dPPC with deoxycholate). PLA2 catalyzes the calcium-dependent hydrolysis of the 2-acyl groups in 3-sn-phosphoglycerides. In Trimeresurus stejnegeri (Chinese green tree viper), this protein is Basic phospholipase A2 Ts-G6D49.